The chain runs to 258 residues: UPF0246 protein HI_0984 (258 aa).

Belongs to the UPF0246 family.

The polypeptide is UPF0246 protein HI_0984 (Haemophilus influenzae (strain ATCC 51907 / DSM 11121 / KW20 / Rd)).